The chain runs to 111 residues: Small ribosomal subunit protein bS16 (111 aa).

This sequence belongs to the bacterial ribosomal protein bS16 family.

The sequence is that of Small ribosomal subunit protein bS16 from Rickettsia bellii (strain OSU 85-389).